The primary structure comprises 592 residues: Aspartate--tRNA ligase (592 aa).

Residue Glu-171 participates in L-aspartate binding. Residues 195-198 (QLFK) are aspartate. Residue Arg-217 participates in L-aspartate binding. ATP is bound by residues 217–219 (RDE) and Gln-226. Residue His-448 coordinates L-aspartate. Glu-482 provides a ligand contact to ATP. Arg-489 contributes to the L-aspartate binding site. 534–537 (GLDR) contacts ATP.

The protein belongs to the class-II aminoacyl-tRNA synthetase family. Type 1 subfamily. In terms of assembly, homodimer.

The protein localises to the cytoplasm. It carries out the reaction tRNA(Asp) + L-aspartate + ATP = L-aspartyl-tRNA(Asp) + AMP + diphosphate. In terms of biological role, catalyzes the attachment of L-aspartate to tRNA(Asp) in a two-step reaction: L-aspartate is first activated by ATP to form Asp-AMP and then transferred to the acceptor end of tRNA(Asp). This Vibrio vulnificus (strain CMCP6) protein is Aspartate--tRNA ligase.